Here is a 602-residue protein sequence, read N- to C-terminus: Elongation factor 4 (602 aa).

One can recognise a tr-type G domain in the interval Ser-7–Gln-189. Residues Asp-19–Thr-24 and Asn-136–Asp-139 each bind GTP.

The protein belongs to the TRAFAC class translation factor GTPase superfamily. Classic translation factor GTPase family. LepA subfamily.

It is found in the cell inner membrane. It catalyses the reaction GTP + H2O = GDP + phosphate + H(+). Functionally, required for accurate and efficient protein synthesis under certain stress conditions. May act as a fidelity factor of the translation reaction, by catalyzing a one-codon backward translocation of tRNAs on improperly translocated ribosomes. Back-translocation proceeds from a post-translocation (POST) complex to a pre-translocation (PRE) complex, thus giving elongation factor G a second chance to translocate the tRNAs correctly. Binds to ribosomes in a GTP-dependent manner. The sequence is that of Elongation factor 4 from Prochlorococcus marinus (strain MIT 9312).